Reading from the N-terminus, the 544-residue chain is CTP synthase (544 aa).

Residues 1–265 (MTKFIFVTGG…DNIITEQLQL (265 aa)) form an amidoligase domain region. Ser13 contributes to the CTP binding site. Ser13 serves as a coordination point for UTP. ATP contacts are provided by residues 14-19 (SLGKGI) and Asp71. Residues Asp71 and Glu139 each contribute to the Mg(2+) site. CTP is bound by residues 146-148 (DIE), 186-191 (KTKPTQ), and Lys222. UTP contacts are provided by residues 186-191 (KTKPTQ) and Lys222. One can recognise a Glutamine amidotransferase type-1 domain in the interval 290–544 (KIAMVGKYVD…VKAALNNKKA (255 aa)). Gly353 lines the L-glutamine pocket. Cys380 acts as the Nucleophile; for glutamine hydrolysis in catalysis. L-glutamine contacts are provided by residues 381-384 (LGMQ), Glu404, and Arg471. Residues His517 and Glu519 contribute to the active site.

It belongs to the CTP synthase family. In terms of assembly, homotetramer.

It carries out the reaction UTP + L-glutamine + ATP + H2O = CTP + L-glutamate + ADP + phosphate + 2 H(+). The catalysed reaction is L-glutamine + H2O = L-glutamate + NH4(+). It catalyses the reaction UTP + NH4(+) + ATP = CTP + ADP + phosphate + 2 H(+). It functions in the pathway pyrimidine metabolism; CTP biosynthesis via de novo pathway; CTP from UDP: step 2/2. With respect to regulation, allosterically activated by GTP, when glutamine is the substrate; GTP has no effect on the reaction when ammonia is the substrate. The allosteric effector GTP functions by stabilizing the protein conformation that binds the tetrahedral intermediate(s) formed during glutamine hydrolysis. Inhibited by the product CTP, via allosteric rather than competitive inhibition. In terms of biological role, catalyzes the ATP-dependent amination of UTP to CTP with either L-glutamine or ammonia as the source of nitrogen. Regulates intracellular CTP levels through interactions with the four ribonucleotide triphosphates. The polypeptide is CTP synthase (Neisseria meningitidis serogroup A / serotype 4A (strain DSM 15465 / Z2491)).